A 506-amino-acid chain; its full sequence is Maturase K (506 aa).

It belongs to the intron maturase 2 family. MatK subfamily.

It localises to the plastid. The protein resides in the chloroplast. Usually encoded in the trnK tRNA gene intron. Probably assists in splicing its own and other chloroplast group II introns. The chain is Maturase K from Phyllodoce empetriformis (Pink mountainheath).